The chain runs to 353 residues: Probable protein phosphatase 2C 48 (353 aa).

Residues 54–348 (FAAVCSRRGE…DDCSAICLFF (295 aa)) enclose the PPM-type phosphatase domain. Residues Asp-90, Gly-91, Asp-293, and Asp-339 each contribute to the Mn(2+) site.

Belongs to the PP2C family. Requires Mg(2+) as cofactor. It depends on Mn(2+) as a cofactor.

The enzyme catalyses O-phospho-L-seryl-[protein] + H2O = L-seryl-[protein] + phosphate. The catalysed reaction is O-phospho-L-threonyl-[protein] + H2O = L-threonyl-[protein] + phosphate. The chain is Probable protein phosphatase 2C 48 from Oryza sativa subsp. japonica (Rice).